Consider the following 995-residue polypeptide: Epididymis-specific alpha-mannosidase (995 aa).

An N-terminal signal peptide occupies residues 1–21 (MGPHSWLPLFMQLALLGPQWA). Histidine 36, aspartate 38, and aspartate 151 together coordinate Zn(2+). The active-site Nucleophile is aspartate 151. An N-linked (GlcNAc...) asparagine glycan is attached at asparagine 285. Histidine 411 is a binding site for Zn(2+). N-linked (GlcNAc...) asparagine glycans are attached at residues asparagine 593, asparagine 625, asparagine 657, asparagine 733, asparagine 793, asparagine 875, and asparagine 977. The tract at residues 956–977 (TEDGHHHRGSSRRPLPPLRGPN) is disordered.

It belongs to the glycosyl hydrolase 38 family. Requires Zn(2+) as cofactor. In terms of processing, processed into a 27 kDa fragment localized on the equatorial segment and the apical rim of the head of mature sperm. In terms of tissue distribution, specific to the caput and corpus of the epididymis.

The protein localises to the secreted. The enzyme catalyses Hydrolysis of terminal, non-reducing alpha-D-mannose residues in alpha-D-mannosides.. Can digest both p-nitro-phenyl-alpha-D-mannoside and high mannose oligosaccharide (Man(8)-GlcNAc(2)). May be involved in sperm maturation. Has a possible role in specific sperm-egg interaction since sperm surface mannosidase acts like a receptor for mannose-containing oligosaccharides located on the zona pellucida. In Sus scrofa (Pig), this protein is Epididymis-specific alpha-mannosidase (MAN2B2).